The chain runs to 436 residues: 2-aminohexano-6-lactam racemase (436 aa).

Residues 110 to 111 (GS), tyrosine 137, and 238 to 241 (DEVK) each bind pyridoxal 5'-phosphate. The active site involves tyrosine 137. Residue lysine 267 is modified to N6-(pyridoxal phosphate)lysine. Threonine 295 is a pyridoxal 5'-phosphate binding site.

The protein belongs to the class-III pyridoxal-phosphate-dependent aminotransferase family. In terms of assembly, monomer. Pyridoxal 5'-phosphate serves as cofactor.

It catalyses the reaction L-2-aminohexano-6-lactam = D-2-aminohexano-6-lactam. Functionally, catalyzes the interconversion of L-alpha-amino-epsilon-caprolactam and D-alpha-amino-epsilon-caprolactam. This chain is 2-aminohexano-6-lactam racemase, found in Achromobacter obae.